A 299-amino-acid chain; its full sequence is Leucine zipper transcription factor-like protein 1 (299 aa).

An interaction with BSS9 region spans residues 145-299 (GTTELLNKEI…KRLAKYESED (155 aa)). A coiled-coil region spans residues 145–299 (GTTELLNKEI…KRLAKYESED (155 aa)).

It belongs to the LZTFL1 family. Self-associates. Interacts with BBS9; the interaction mediates the association of LZTL1 with the BBsome complex and regulates BBSome ciliary trafficking.

It is found in the cytoplasm. Regulates ciliary localization of the BBSome complex. Together with the BBSome complex, controls SMO ciliary trafficking and contributes to the sonic hedgehog (SHH) pathway regulation. May play a role in neurite outgrowth. May have tumor suppressor function. The chain is Leucine zipper transcription factor-like protein 1 (Lztfl1) from Rattus norvegicus (Rat).